A 206-amino-acid chain; its full sequence is Methyl-coenzyme M reductase operon protein C (206 aa).

In terms of assembly, MCR is composed of three subunits: alpha, beta, and gamma. The function of proteins C and D is not known.

The polypeptide is Methyl-coenzyme M reductase operon protein C (mcrC) (Methanosarcina barkeri (strain Fusaro / DSM 804)).